Reading from the N-terminus, the 505-residue chain is Katanin p60 ATPase-containing subunit A-like 2 (505 aa).

A LisH domain is found at 25-57 (RRKNLLILIMHYLLQEGYVDSANSLEQETKISS). 2 disordered regions span residues 94-127 (LDHD…IGQQ) and 140-167 (RTNG…EASE). Composition is skewed to polar residues over residues 114–127 (GSNS…IGQQ) and 155–164 (QESGGNSPQE). 298–305 (GPPGTGKT) contributes to the ATP binding site.

It belongs to the AAA ATPase family. Katanin p60 subunit A1 subfamily. A-like 2 sub-subfamily.

The protein localises to the cytoplasm. It is found in the cytoskeleton. Its subcellular location is the spindle. It localises to the spindle pole. It catalyses the reaction n ATP + n H2O + a microtubule = n ADP + n phosphate + (n+1) alpha/beta tubulin heterodimers.. In terms of biological role, severs microtubules in vitro in an ATP-dependent manner. This activity may promote rapid reorganization of cellular microtubule arrays. The protein is Katanin p60 ATPase-containing subunit A-like 2 (katnal2) of Xenopus laevis (African clawed frog).